Consider the following 494-residue polypeptide: Amidophosphoribosyltransferase (494 aa).

A propeptide spanning residues 1 to 10 is cleaved from the precursor; the sequence is MFNYSGLNEE. Cys-11 acts as the Nucleophile in catalysis. Residues 11 to 231 form the Glutamine amidotransferase type-2 domain; it reads CGVFGIWNHP…AGEYVVINDK (221 aa). Residues Ser-294, Asp-356, and Asp-357 each contribute to the Mg(2+) site.

In the C-terminal section; belongs to the purine/pyrimidine phosphoribosyltransferase family. Requires Mg(2+) as cofactor.

It carries out the reaction 5-phospho-beta-D-ribosylamine + L-glutamate + diphosphate = 5-phospho-alpha-D-ribose 1-diphosphate + L-glutamine + H2O. Its pathway is purine metabolism; IMP biosynthesis via de novo pathway; N(1)-(5-phospho-D-ribosyl)glycinamide from 5-phospho-alpha-D-ribose 1-diphosphate: step 1/2. In terms of biological role, catalyzes the formation of phosphoribosylamine from phosphoribosylpyrophosphate (PRPP) and glutamine. In Staphylococcus aureus (strain MRSA252), this protein is Amidophosphoribosyltransferase.